The chain runs to 447 residues: Probable 3-deoxy-D-manno-octulosonic acid transferase, mitochondrial (447 aa).

The transit peptide at 1-32 (MKLGVFVYRLYRALTYGVSPLIHLHIRWRRLR) directs the protein to the mitochondrion. The active-site Proton acceptor is the glutamate 66. CMP is bound by residues 278–279 (PR), 320–322 (LGE), and 347–350 (NLSE).

The protein belongs to the glycosyltransferase group 1 family. Glycosyltransferase 30 subfamily. In terms of tissue distribution, expressed in leaves, stems and flowers.

The protein resides in the mitochondrion. The catalysed reaction is lipid IVA (E. coli) + CMP-3-deoxy-beta-D-manno-octulosonate = alpha-Kdo-(2-&gt;6)-lipid IVA (E. coli) + CMP + H(+). The enzyme catalyses alpha-Kdo-(2-&gt;6)-lipid IVA (E. coli) + CMP-3-deoxy-beta-D-manno-octulosonate = alpha-Kdo-(2-&gt;4)-alpha-Kdo-(2-&gt;6)-lipid IVA (E. coli) + CMP + H(+). Its pathway is glycolipid biosynthesis; KDO(2)-lipid A biosynthesis; KDO(2)-lipid A from CMP-3-deoxy-D-manno-octulosonate and lipid IV(A): step 1/4. It participates in glycolipid biosynthesis; KDO(2)-lipid A biosynthesis; KDO(2)-lipid A from CMP-3-deoxy-D-manno-octulosonate and lipid IV(A): step 2/4. Its function is as follows. Involved in the biosynthesis of lipid A, a phosphorylated glycolipid that in bacteria anchors the lipopolysaccharide to the outer membrane of the cell. Catalyzes the transfer of two 3-deoxy-D-manno-octulosonate (Kdo) residues from CMP-Kdo to lipid IV(A), the tetraacyldisaccharide-1,4'-bisphosphate precursor of lipid A. Lipid A-like molecules in plants may serve as structural components of the outer membranes of mitochondria and/or chloroplasts, or may be involved in signal transduction or plant defense responses. This Arabidopsis thaliana (Mouse-ear cress) protein is Probable 3-deoxy-D-manno-octulosonic acid transferase, mitochondrial (KDTA).